Here is a 995-residue protein sequence, read N- to C-terminus: MAGVQKRKRDLEDQDDNGSEEDDIAFDIANEIALNDSESDANDSDSEVEADYGPNDVQDVIEYSSDEEEGVNNKKKAENKDIKKKKNSKKEIAAFPMLEMSDDENNASGKTQTGDDEDDVNEYFSTNNLEKTKHKKGSFPSFGLSKIVLNNIKRKGFRQPTPIQRKTIPLILQSRDIVGMARTGSGKTAAFILPMVEKLKSHSGKIGARAVILSPSRELAMQTFNVFKDFARGTELRSVLLTGGDSLEEQFGMMMTNPDVIIATPGRFLHLKVEMNLDLKSVEYVVFDEADRLFEMGFQEQLNELLASLPTTRQTLLFSATLPNSLVDFVKAGLVNPVLVRLDAETKVSENLEMLFLSSKNADREANLLYILQEIIKIPLATSEQLQKLQNSNNEADSDSDDENDRQKKRRNFKKEKFRKQKMPAANELPSEKATILFVPTRHHVEYISQLLRDCGYLISYIYGTLDQHARKRQLYNFRAGLTSILVVTDVAARGVDIPMLANVINYTLPGSSKIFVHRVGRTARAGNKGWAYSIVAENELPYLLDLELFLGKKILLTPMYDSLVDVMKKRWIDEGKPEYQFQPPKLSYTKRLVLGSCPRLDVEGLGDLYKNLMSSNFDLQLAKKTAMKAEKLYYRTRTSASPESLKRSKEIISSGWDAQNAFFGKNEEKEKLDFLAKLQNRRNKETVFEFTRNPDDEMAVFMKRRRKQLAPIQRKATERRELLEKERMAGLSHSIEDEILKGDDGETGYTVSEDALKEFEDADQLLEAQENENKKKKKPKSFKDPTFFLSHYAPAGDIQDKQLQITNGFANDAAQAAYDLNSDDKVQVHKQTATVKWDKKRKKYVNTQGIDNKKYIIGESGQKIAASFRSGRFDDWSKARNLKPLKVGSRETSIPSNLLEDPSQGPAANGRTVRGKFKHKQMKAPKMPDKHRDNYYSQKKKVEKALQSGISVKGYNNAPGLRSELKSTEQIRKDRIIAEKKRAKNARPSKKRKF.

Residues 1 to 120 (MAGVQKRKRD…TQTGDDEDDV (120 aa)) form a disordered region. Acidic residues-rich tracts occupy residues 12-25 (EDQDDNGSEEDDIA) and 37-50 (SESDANDSDSEVEA). Residues 71-81 (VNNKKKAENKD) are compositionally biased toward basic and acidic residues. Ser-101 bears the Phosphoserine mark. The Q motif motif lies at 137-165 (GSFPSFGLSKIVLNNIKRKGFRQPTPIQR). One can recognise a Helicase ATP-binding domain in the interval 168–340 (IPLILQSRDI…KAGLVNPVLV (173 aa)). 181–188 (ARTGSGKT) is an ATP binding site. A DEAD box motif is present at residues 288–291 (DEAD). Disordered stretches follow at residues 389 to 427 (LQNSNNEADSDSDDENDRQKKRRNFKKEKFRKQKMPAAN) and 889 to 973 (GSRE…EQIR). Ser-398 and Ser-400 each carry phosphoserine. Basic residues-rich tracts occupy residues 407-422 (QKKRRNFKKEKFRKQK) and 914-924 (VRGKFKHKQMK). Residues 418–568 (FRKQKMPAAN…PMYDSLVDVM (151 aa)) enclose the Helicase C-terminal domain. Basic and acidic residues predominate over residues 964 to 973 (SELKSTEQIR).

Belongs to the DEAD box helicase family. DDX54/DBP10 subfamily. Interacts with RRP1 and associates with pre-ribosomal particles.

Its subcellular location is the nucleus. It is found in the nucleolus. The enzyme catalyses ATP + H2O = ADP + phosphate + H(+). Its function is as follows. ATP-binding RNA helicase involved in the biogenesis of 60S ribosomal subunits and is required for the normal formation of 25S and 5.8S rRNAs. This is ATP-dependent RNA helicase DBP10 (DBP10) from Saccharomyces cerevisiae (strain ATCC 204508 / S288c) (Baker's yeast).